Here is a 298-residue protein sequence, read N- to C-terminus: ATP synthase F(1) complex subunit gamma, mitochondrial (298 aa).

Residues 1-25 (MFSRAGVAGLSAWTVQPQWIQVRNM) constitute a mitochondrion transit peptide. N6-acetyllysine is present on Lys39. An N6-succinyllysine modification is found at Lys49. Position 55 is an N6-acetyllysine (Lys55). N6-acetyllysine; alternate is present on Lys115. Lys115 is subject to N6-succinyllysine; alternate. A Phosphoserine modification is found at Ser146. N6-acetyllysine; alternate is present on Lys154. Position 154 is an N6-succinyllysine; alternate (Lys154). Position 197 is an N6-acetyllysine (Lys197). An N6-succinyllysine modification is found at Lys270.

It belongs to the ATPase gamma chain family. In terms of assembly, component of the ATP synthase complex composed at least of ATP5F1A/subunit alpha, ATP5F1B/subunit beta, ATP5MC1/subunit c (homooctomer), MT-ATP6/subunit a, MT-ATP8/subunit 8, ATP5ME/subunit e, ATP5MF/subunit f, ATP5MG/subunit g, ATP5MK/subunit k, ATP5MJ/subunit j, ATP5F1C/subunit gamma, ATP5F1D/subunit delta, ATP5F1E/subunit epsilon, ATP5PF/subunit F6, ATP5PB/subunit b, ATP5PD/subunit d, ATP5PO/subunit OSCP. ATP synthase complex consists of a soluble F(1) head domain (subunits alpha(3) and beta(3)) - the catalytic core - and a membrane F(0) domain - the membrane proton channel (subunits c, a, 8, e, f, g, k and j). These two domains are linked by a central stalk (subunits gamma, delta, and epsilon) rotating inside the F1 region and a stationary peripheral stalk (subunits F6, b, d, and OSCP). Interacts with FLVCR2; this interaction occurs in the absence of heme and is disrupted upon heme binding.

It is found in the mitochondrion inner membrane. In terms of biological role, subunit gamma, of the mitochondrial membrane ATP synthase complex (F(1)F(0) ATP synthase or Complex V) that produces ATP from ADP in the presence of a proton gradient across the membrane which is generated by electron transport complexes of the respiratory chain. ATP synthase complex consist of a soluble F(1) head domain - the catalytic core - and a membrane F(1) domain - the membrane proton channel. These two domains are linked by a central stalk rotating inside the F(1) region and a stationary peripheral stalk. During catalysis, ATP synthesis in the catalytic domain of F(1) is coupled via a rotary mechanism of the central stalk subunits to proton translocation. In vivo, can only synthesize ATP although its ATP hydrolase activity can be activated artificially in vitro. With the central stalk subunit delta, is essential for the biogenesis of F(1) catalytic part of the ATP synthase complex namely in the formation of F1 assembly intermediate. The protein is ATP synthase F(1) complex subunit gamma, mitochondrial of Bos taurus (Bovine).